The sequence spans 273 residues: Pre-mRNA-splicing factor CWC23 (273 aa).

One can recognise a J domain in the interval 15 to 87; sequence DLYALLEVSI…SLRATYNRWL (73 aa).

The protein belongs to the DnaJ family. In terms of assembly, associated with the spliceosome.

It is found in the cytoplasm. The protein localises to the nucleus. Its function is as follows. Involved in pre-mRNA splicing. May be involved in endoplasmic reticulum-associated protein degradation (ERAD) and required for growth at low and high temperatures. The polypeptide is Pre-mRNA-splicing factor CWC23 (CWC23) (Eremothecium gossypii (strain ATCC 10895 / CBS 109.51 / FGSC 9923 / NRRL Y-1056) (Yeast)).